The following is a 698-amino-acid chain: Dolichyl-diphosphooligosaccharide--protein glycosyltransferase subunit 2 (698 aa).

A signal peptide spans Met1 to Ala29. At Val30–Glu600 the chain is on the lumenal side. A helical transmembrane segment spans residues Leu601–Met621. Residues Arg622–Ala638 are Cytoplasmic-facing. Residues Phe639–Ile659 traverse the membrane as a helical segment. Position 660 (Lys660) is a topological domain, lumenal. The helical transmembrane segment at Leu661–Gly681 threads the bilayer. Over His682–Ala698 the chain is Cytoplasmic.

This sequence belongs to the SWP1 family. As to quaternary structure, component of the oligosaccharyltransferase (OST) complex.

It is found in the endoplasmic reticulum membrane. Its pathway is protein modification; protein glycosylation. In terms of biological role, subunit of the oligosaccharyl transferase (OST) complex that catalyzes the initial transfer of a defined glycan (Glc(3)Man(9)GlcNAc(2) in eukaryotes) from the lipid carrier dolichol-pyrophosphate to an asparagine residue within an Asn-X-Ser/Thr consensus motif in nascent polypeptide chains, the first step in protein N-glycosylation. N-glycosylation occurs cotranslationally and the complex associates with the Sec61 complex at the channel-forming translocon complex that mediates protein translocation across the endoplasmic reticulum (ER). All subunits are required for a maximal enzyme activity. The sequence is that of Dolichyl-diphosphooligosaccharide--protein glycosyltransferase subunit 2 (RPN2) from Oryza sativa subsp. japonica (Rice).